The sequence spans 196 residues: Imidazole glycerol phosphate synthase subunit HisH (196 aa).

The 195-residue stretch at 2–196 (KVAVVKYNAG…ERVLRNFLDL (195 aa)) folds into the Glutamine amidotransferase type-1 domain. The active-site Nucleophile is the cysteine 77. Residues histidine 178 and glutamate 180 contribute to the active site.

Heterodimer of HisH and HisF.

The protein resides in the cytoplasm. The enzyme catalyses 5-[(5-phospho-1-deoxy-D-ribulos-1-ylimino)methylamino]-1-(5-phospho-beta-D-ribosyl)imidazole-4-carboxamide + L-glutamine = D-erythro-1-(imidazol-4-yl)glycerol 3-phosphate + 5-amino-1-(5-phospho-beta-D-ribosyl)imidazole-4-carboxamide + L-glutamate + H(+). It carries out the reaction L-glutamine + H2O = L-glutamate + NH4(+). Its pathway is amino-acid biosynthesis; L-histidine biosynthesis; L-histidine from 5-phospho-alpha-D-ribose 1-diphosphate: step 5/9. Its function is as follows. IGPS catalyzes the conversion of PRFAR and glutamine to IGP, AICAR and glutamate. The HisH subunit catalyzes the hydrolysis of glutamine to glutamate and ammonia as part of the synthesis of IGP and AICAR. The resulting ammonia molecule is channeled to the active site of HisF. The chain is Imidazole glycerol phosphate synthase subunit HisH from Bacteroides thetaiotaomicron (strain ATCC 29148 / DSM 2079 / JCM 5827 / CCUG 10774 / NCTC 10582 / VPI-5482 / E50).